The primary structure comprises 396 residues: Elongation factor Tu (396 aa).

Residues 10 to 205 (KPHVNIGTIG…AVDSYIPTPE (196 aa)) form the tr-type G domain. The interval 19-26 (GHVDHGKT) is G1. 19–26 (GHVDHGKT) serves as a coordination point for GTP. Position 26 (Thr-26) interacts with Mg(2+). The tract at residues 60 to 64 (GITIN) is G2. The G3 stretch occupies residues 81–84 (DCPG). Residues 81 to 85 (DCPGH) and 136 to 139 (NKCD) contribute to the GTP site. The interval 136–139 (NKCD) is G4. The G5 stretch occupies residues 174-176 (SAK).

Belongs to the TRAFAC class translation factor GTPase superfamily. Classic translation factor GTPase family. EF-Tu/EF-1A subfamily. Monomer.

The protein localises to the cytoplasm. The catalysed reaction is GTP + H2O = GDP + phosphate + H(+). Its function is as follows. GTP hydrolase that promotes the GTP-dependent binding of aminoacyl-tRNA to the A-site of ribosomes during protein biosynthesis. The polypeptide is Elongation factor Tu (Brevibacillus brevis (strain 47 / JCM 6285 / NBRC 100599)).